Here is a 379-residue protein sequence, read N- to C-terminus: Cinnamyl alcohol dehydrogenase 7 (379 aa).

A compositionally biased stretch (low complexity) spans 1-13; the sequence is MAPTTTATAAAEQ. A disordered region spans residues 1 to 21; that stretch reads MAPTTTATAAAEQAPPPQHTR. Cysteine 60 contacts Zn(2+). Serine 62 contacts NADP(+). Residues histidine 82, glutamate 83, cysteine 113, cysteine 116, cysteine 119, cysteine 127, and cysteine 185 each contribute to the Zn(2+) site. NADP(+)-binding positions include threonine 189, 210 to 215, 233 to 238, threonine 273, glycine 297, and 320 to 322; these read GLGGLG, STSPVK, and SCM.

The protein belongs to the zinc-containing alcohol dehydrogenase family. As to quaternary structure, homodimer. It depends on Zn(2+) as a cofactor. As to expression, expressed in roots, first internodes and panicles. Expressed in the vascular bundles and sclerenchyma cells below the epidermis in leaves and stems.

It carries out the reaction (E)-cinnamyl alcohol + NADP(+) = (E)-cinnamaldehyde + NADPH + H(+). It catalyses the reaction (E)-coniferol + NADP(+) = (E)-coniferaldehyde + NADPH + H(+). The catalysed reaction is (E)-sinapyl alcohol + NADP(+) = (E)-sinapaldehyde + NADPH + H(+). The enzyme catalyses (E)-4-coumaroyl alcohol + NADP(+) = (E)-4-coumaraldehyde + NADPH + H(+). It carries out the reaction (E)-caffeyl alcohol + NADP(+) = (E)-caffeyl aldehyde + NADPH + H(+). The protein operates within aromatic compound metabolism; phenylpropanoid biosynthesis. Its function is as follows. Involved in lignin biosynthesis. May catalyze the final step specific for the production of lignin monomers, like coniferyl alcohol, sinapyl alcohol and 4-coumaryl alcohol. The chain is Cinnamyl alcohol dehydrogenase 7 from Oryza sativa subsp. japonica (Rice).